Consider the following 118-residue polypeptide: Large ribosomal subunit protein uL24 (118 aa).

It belongs to the universal ribosomal protein uL24 family. In terms of assembly, part of the 50S ribosomal subunit.

Its function is as follows. One of two assembly initiator proteins, it binds directly to the 5'-end of the 23S rRNA, where it nucleates assembly of the 50S subunit. In terms of biological role, one of the proteins that surrounds the polypeptide exit tunnel on the outside of the subunit. The sequence is that of Large ribosomal subunit protein uL24 from Prochlorococcus marinus (strain MIT 9515).